Here is a 714-residue protein sequence, read N- to C-terminus: Polyribonucleotide nucleotidyltransferase (714 aa).

Residues Asp-488 and Asp-494 each contribute to the Mg(2+) site. Positions 555–614 (PRIEVMNIPTDKIRDVIGSGGKVIREIVEKTGAKINIEDDGTVKIASSNGKEIEAAKKWI) constitute a KH domain. The 69-residue stretch at 624–692 (GEIYEGTVVK…ERGKVRLSMK (69 aa)) folds into the S1 motif domain.

This sequence belongs to the polyribonucleotide nucleotidyltransferase family. Requires Mg(2+) as cofactor.

It is found in the cytoplasm. It catalyses the reaction RNA(n+1) + phosphate = RNA(n) + a ribonucleoside 5'-diphosphate. In terms of biological role, involved in mRNA degradation. Catalyzes the phosphorolysis of single-stranded polyribonucleotides processively in the 3'- to 5'-direction. This Brucella suis biovar 1 (strain 1330) protein is Polyribonucleotide nucleotidyltransferase.